The primary structure comprises 396 residues: Activity-regulated cytoskeleton-associated protein (396 aa).

Residues S54–Y78 are a coiled coil. The tract at residues K89 to E100 is interaction with SH3GL1 or SH3GL3. An interaction with DNM2 region spans residues Q195–F214. S260 bears the Phosphoserine mark. Residues K268 and K269 each participate in a glycyl lysine isopeptide (Lys-Gly) (interchain with G-Cter in ubiquitin) cross-link. T278 bears the Phosphothreonine mark. The disordered stretch occupies residues Q356–E396. The span at P381–E396 shows a compositional bias: polar residues.

Belongs to the ARC/ARG3.1 family. In terms of assembly, homooligomer; homooligomerizes into virion-like capsids. Interacts with SH3GL1/endophilin-2, SH3GL3/endophilin-3 and DNM2/DYN2. Interacts with CAMK2B (in the kinase inactive state); leading to target ARC to inactive synapses. Interacts with PSEN1. In terms of processing, palmitoylation anchors the protein into the membrane by allowing direct insertion into the hydrophobic core of the lipid bilayer. Post-translationally, ubiquitinated by UBE3A, leading to its degradation by the proteasome, thereby promoting AMPA receptors (AMPARs) expression at synapses. Ubiquitinated by RNF216 at Lys-268 and Lys-269 limiting ARC protein levels induced by synaptic activity and thus regulating ARC-dependent forms of synaptic plasticity. Phosphorylation at Ser-260 by CaMK2 prevents homooligomerization into virion-like capsids by disrupting an interaction surface essential for high-order oligomerization. Phosphorylation by CaMK2 inhibits synaptic activity.

Its subcellular location is the extracellular vesicle membrane. The protein resides in the postsynaptic cell membrane. It localises to the synapse. The protein localises to the postsynaptic density. It is found in the early endosome membrane. Its subcellular location is the cell projection. The protein resides in the dendrite. It localises to the cytoplasm. The protein localises to the cytoskeleton. It is found in the cell cortex. Its subcellular location is the dendritic spine. The protein resides in the cytoplasmic vesicle. It localises to the secretory vesicle. The protein localises to the acrosome. It is found in the clathrin-coated vesicle membrane. In terms of biological role, master regulator of synaptic plasticity that self-assembles into virion-like capsids that encapsulate RNAs and mediate intercellular RNA transfer in the nervous system. ARC protein is released from neurons in extracellular vesicles that mediate the transfer of ARC mRNA into new target cells, where ARC mRNA can undergo activity-dependent translation. ARC capsids are endocytosed and are able to transfer ARC mRNA into the cytoplasm of neurons. Acts as a key regulator of synaptic plasticity: required for protein synthesis-dependent forms of long-term potentiation (LTP) and depression (LTD) and for the formation of long-term memory. Regulates synaptic plasticity by promoting endocytosis of AMPA receptors (AMPARs) in response to synaptic activity: this endocytic pathway maintains levels of surface AMPARs in response to chronic changes in neuronal activity through synaptic scaling, thereby contributing to neuronal homeostasis. Acts as a postsynaptic mediator of activity-dependent synapse elimination in the developing cerebellum by mediating elimination of surplus climbing fiber synapses. Accumulates at weaker synapses, probably to prevent their undesired enhancement. This suggests that ARC-containing virion-like capsids may be required to eliminate synaptic material. Required to transduce experience into long-lasting changes in visual cortex plasticity and for long-term memory. Involved in postsynaptic trafficking and processing of amyloid-beta A4 (APP) via interaction with PSEN1. In addition to its role in synapses, also involved in the regulation of the immune system: specifically expressed in skin-migratory dendritic cells and regulates fast dendritic cell migration, thereby regulating T-cell activation. The chain is Activity-regulated cytoskeleton-associated protein from Homo sapiens (Human).